The sequence spans 166 residues: UPF0561 protein C2orf68 homolog (166 aa).

Over residues 36 to 49 (RDDYDKKVKQAAKE) the composition is skewed to basic and acidic residues. The interval 36–108 (RDDYDKKVKQ…EPEPPGHQLF (73 aa)) is disordered.

This sequence belongs to the UPF0561 family.

The polypeptide is UPF0561 protein C2orf68 homolog (Bos taurus (Bovine)).